The primary structure comprises 158 residues: Transcription elongation factor GreA (158 aa).

Positions 45–72 form a coiled coil; sequence AEYHAAREQQSFIEGRIKQLEGELSHAE.

This sequence belongs to the GreA/GreB family.

Necessary for efficient RNA polymerase transcription elongation past template-encoded arresting sites. The arresting sites in DNA have the property of trapping a certain fraction of elongating RNA polymerases that pass through, resulting in locked ternary complexes. Cleavage of the nascent transcript by cleavage factors such as GreA or GreB allows the resumption of elongation from the new 3'terminus. GreA releases sequences of 2 to 3 nucleotides. This Xylella fastidiosa (strain M12) protein is Transcription elongation factor GreA.